The sequence spans 433 residues: Protein CLP1 homolog (433 aa).

Residues glutamate 22, arginine 61, and 128-133 each bind ATP; that span reads DVGKTT.

Belongs to the Clp1 family. Clp1 subfamily.

It is found in the nucleus. Its function is as follows. Required for endonucleolytic cleavage during polyadenylation-dependent pre-mRNA 3'-end formation. In Brugia malayi (Filarial nematode worm), this protein is Protein CLP1 homolog.